A 227-amino-acid polypeptide reads, in one-letter code: GTP:AMP phosphotransferase AK3, mitochondrial (227 aa).

Residues Gly-17, Gly-19, Lys-20, Gly-21, and Thr-22 each coordinate GTP. An N6-succinyllysine modification is found at Lys-20. Lys-29 carries the post-translational modification N6-acetyllysine; alternate. Residue Lys-29 is modified to N6-succinyllysine; alternate. An N6-acetyllysine modification is found at Lys-34. Ser-37 is subject to Phosphoserine. The NMP stretch occupies residues 37 to 66 (SSGDLLRQNMLQGTEIAVLAKSFIDQGKLI). 2 residues coordinate AMP: Ser-38 and Arg-43. Lys-57 is modified (N6-succinyllysine). An N6-acetyllysine; alternate mark is found at Lys-64 and Lys-80. Lys-64 and Lys-80 each carry N6-succinyllysine; alternate. Lys-64 contacts AMP. Residues Gly-91, Arg-94, and Gln-98 each coordinate AMP. Residues 127–164 (ARWIHPASGRVYNIEFNPPKTVGIDDLTGEPLIQREDD) are LID. Positions 128, 138, 139, 161, and 172 each coordinate GTP. Lys-174 and Lys-189 each carry N6-acetyllysine; alternate. An N6-succinyllysine; alternate mark is found at Lys-174 and Lys-189. Thr-201 serves as a coordination point for GTP. Lys-203 bears the N6-acetyllysine mark.

This sequence belongs to the adenylate kinase family. AK3 subfamily. In terms of assembly, monomer.

The protein resides in the mitochondrion matrix. It carries out the reaction a ribonucleoside 5'-triphosphate + AMP = a ribonucleoside 5'-diphosphate + ADP. The enzyme catalyses GTP + AMP = GDP + ADP. It catalyses the reaction ITP + AMP = IDP + ADP. Mitochondrial adenylate kinase with a specific GTP:AMP phosphotransferase activity. Could also use ITP as phosphate donor. Its physiological function is to recycle GTP into GDP which is necessary for the TCA cycle in the mitochondrial matrix. This chain is GTP:AMP phosphotransferase AK3, mitochondrial, found in Rattus norvegicus (Rat).